The chain runs to 212 residues: SOSS complex subunit B1 (212 aa).

The OB DNA-binding region spans 22 to 92 (IVLETGRVTK…TLYTGRGGDL (71 aa)). The tract at residues 110 to 212 (EPNPEYNTQQ…GKETRRSSKR (103 aa)) is disordered. Over residues 114 to 130 (EYNTQQAPNKSVQNNDN) the composition is skewed to polar residues. Phosphothreonine; by ATM is present on Thr117. Positions 131-148 (SPTAPQATTGPPAASPAS) are enriched in low complexity. Positions 149 to 160 (ENQNGNGLSTQL) are enriched in polar residues. Positions 166–178 (PHPSHTPSHPPST) are enriched in low complexity.

It belongs to the SOSS-B family. SOSS-B1 subfamily. Component of the SOSS complex, composed of SOSS-B (SOSS-B1/NABP2 or SOSS-B2/NABP1), SOSS-A/INTS3 and SOSS-C/INIP. SOSS complexes containing SOSS-B1/NABP2 are more abundant than complexes containing SOSS-B2/NABP1. Directly interacts with ATM, SOSS-A/INTS3 and RAD51. Interacts with INTS7. Post-translationally, phosphorylated by ATM in response to DNA damage. Phosphorylation prevents degradation by the proteasome, hence stabilization of the protein and accumulation within cells. Ubiquitinated in a FBXL5-dependent manner, leading to proteasomal degradation.

The protein localises to the nucleus. In terms of biological role, component of the SOSS complex, a multiprotein complex that functions downstream of the MRN complex to promote DNA repair and G2/M checkpoint. In the SOSS complex, acts as a sensor of single-stranded DNA that binds to single-stranded DNA, in particular to polypyrimidines. The SOSS complex associates with DNA lesions and influences diverse endpoints in the cellular DNA damage response including cell-cycle checkpoint activation, recombinational repair and maintenance of genomic stability. Required for efficient homologous recombination-dependent repair of double-strand breaks (DSBs) and ATM-dependent signaling pathways. The polypeptide is SOSS complex subunit B1 (Nabp2) (Mus musculus (Mouse)).